The chain runs to 460 residues: NADH-quinone oxidoreductase subunit N (460 aa).

Helical transmembrane passes span Leu2 to Leu22, Ile28 to Ser48, Ala65 to Tyr85, Ile104 to Phe124, Phe155 to Phe175, Leu196 to Ala216, Pro230 to Leu250, Ile263 to Ala283, Leu292 to Thr312, Leu321 to Leu341, Ile363 to Phe383, Leu400 to Ile420, and Tyr438 to Ile458.

It belongs to the complex I subunit 2 family. As to quaternary structure, NDH-1 is composed of 14 different subunits. Subunits NuoA, H, J, K, L, M, N constitute the membrane sector of the complex.

It is found in the cell inner membrane. It catalyses the reaction a quinone + NADH + 5 H(+)(in) = a quinol + NAD(+) + 4 H(+)(out). Functionally, NDH-1 shuttles electrons from NADH, via FMN and iron-sulfur (Fe-S) centers, to quinones in the respiratory chain. The immediate electron acceptor for the enzyme in this species is believed to be ubiquinone. Couples the redox reaction to proton translocation (for every two electrons transferred, four hydrogen ions are translocated across the cytoplasmic membrane), and thus conserves the redox energy in a proton gradient. This chain is NADH-quinone oxidoreductase subunit N, found in Rickettsia bellii (strain RML369-C).